Here is a 206-residue protein sequence, read N- to C-terminus: Large ribosomal subunit protein uL4 (206 aa).

A disordered region spans residues 48 to 75 (TQSAKTRAEVSGGGIKPWRQKGTGRARQ).

It belongs to the universal ribosomal protein uL4 family. Part of the 50S ribosomal subunit.

Its function is as follows. One of the primary rRNA binding proteins, this protein initially binds near the 5'-end of the 23S rRNA. It is important during the early stages of 50S assembly. It makes multiple contacts with different domains of the 23S rRNA in the assembled 50S subunit and ribosome. In terms of biological role, forms part of the polypeptide exit tunnel. This is Large ribosomal subunit protein uL4 from Clostridium botulinum (strain Loch Maree / Type A3).